The primary structure comprises 146 residues: UPF0742 protein PB2B2.17c (146 aa).

Residues 38–60 (LTVKYCLAVKLLIYLLYCWYIYS) form a helical membrane-spanning segment.

The protein belongs to the UPF0742 family.

The protein resides in the cytoplasm. Its subcellular location is the nucleus membrane. The chain is UPF0742 protein PB2B2.17c from Schizosaccharomyces pombe (strain 972 / ATCC 24843) (Fission yeast).